The primary structure comprises 393 residues: Phosphoglycerate kinase (393 aa).

Residues 21 to 23 (DLN), Arg36, 59 to 62 (HLGR), Arg113, and Arg146 contribute to the substrate site. ATP is bound by residues Lys197, Glu319, and 345-348 (GGDT).

Belongs to the phosphoglycerate kinase family. Monomer.

It localises to the cytoplasm. The enzyme catalyses (2R)-3-phosphoglycerate + ATP = (2R)-3-phospho-glyceroyl phosphate + ADP. It functions in the pathway carbohydrate degradation; glycolysis; pyruvate from D-glyceraldehyde 3-phosphate: step 2/5. The sequence is that of Phosphoglycerate kinase from Nitratidesulfovibrio vulgaris (strain DSM 19637 / Miyazaki F) (Desulfovibrio vulgaris).